Reading from the N-terminus, the 319-residue chain is Ribosomal RNA small subunit methyltransferase H (319 aa).

Residues Gly39–His41, Asp59, Phe83, Asp104, and Gln111 contribute to the S-adenosyl-L-methionine site.

It belongs to the methyltransferase superfamily. RsmH family.

The protein localises to the cytoplasm. The catalysed reaction is cytidine(1402) in 16S rRNA + S-adenosyl-L-methionine = N(4)-methylcytidine(1402) in 16S rRNA + S-adenosyl-L-homocysteine + H(+). Specifically methylates the N4 position of cytidine in position 1402 (C1402) of 16S rRNA. This is Ribosomal RNA small subunit methyltransferase H from Ralstonia nicotianae (strain ATCC BAA-1114 / GMI1000) (Ralstonia solanacearum).